Consider the following 318-residue polypeptide: Aspartate carbamoyltransferase catalytic subunit (318 aa).

Residues Arg-56 and Thr-57 each coordinate carbamoyl phosphate. Residue Lys-84 coordinates L-aspartate. Residues Arg-106, His-143, and Gln-146 each coordinate carbamoyl phosphate. L-aspartate-binding residues include Arg-176 and Arg-230. Carbamoyl phosphate-binding residues include Gly-271 and Pro-272.

The protein belongs to the aspartate/ornithine carbamoyltransferase superfamily. ATCase family. In terms of assembly, heterododecamer (2C3:3R2) of six catalytic PyrB chains organized as two trimers (C3), and six regulatory PyrI chains organized as three dimers (R2).

It catalyses the reaction carbamoyl phosphate + L-aspartate = N-carbamoyl-L-aspartate + phosphate + H(+). Its pathway is pyrimidine metabolism; UMP biosynthesis via de novo pathway; (S)-dihydroorotate from bicarbonate: step 2/3. Its function is as follows. Catalyzes the condensation of carbamoyl phosphate and aspartate to form carbamoyl aspartate and inorganic phosphate, the committed step in the de novo pyrimidine nucleotide biosynthesis pathway. The chain is Aspartate carbamoyltransferase catalytic subunit from Mycobacterium avium (strain 104).